The chain runs to 323 residues: L-lactate dehydrogenase (323 aa).

NAD(+) contacts are provided by residues valine 18, aspartate 39, tyrosine 69, and 83–84 (GA). Positions 86 and 92 each coordinate substrate. NAD(+) is bound by residues serine 105, 122-124 (VAN), and serine 147. 124 to 127 (NPVD) is a substrate binding site. A substrate-binding site is contributed by 152–155 (DTGR). Residue histidine 179 is the Proton acceptor of the active site. Phosphotyrosine is present on tyrosine 223. Threonine 232 is a binding site for substrate.

This sequence belongs to the LDH/MDH superfamily. LDH family. As to quaternary structure, homotetramer.

The protein localises to the cytoplasm. The catalysed reaction is (S)-lactate + NAD(+) = pyruvate + NADH + H(+). Its pathway is fermentation; pyruvate fermentation to lactate; (S)-lactate from pyruvate: step 1/1. Under neutral conditions, the reaction is stimulated 4-fold by fructose 1,6-bisphosphate (FBP), however the L-lactate dehydrogenase is a nonallosteric enzyme. Calcium and zinc ions at 1 mM stimulate the activity almost 2-fold. Weakly inhibited by cadmium, cobalt and copper ions. Its function is as follows. Catalyzes the conversion of lactate to pyruvate. This is L-lactate dehydrogenase from Lactobacillus helveticus (Lactobacillus suntoryeus).